We begin with the raw amino-acid sequence, 468 residues long: MINRLKVTFSAAAFSLLAGTALAQTPDADSALVQKGAYVARLGDCVACHTALHGQSYAGGLEIKSPIGTIYSTNITPDPTYGIGRYTFAEFDEAVRHGIRKDGSTLYPAMPYPSFSRMTKEDMQALYAYFMHGVKPVAQPDKQPDISWPLSMRWPLGIWRMMFSPSPKDFTPAPGTDPEIARGDYLVTGPGHCGACHTPRGFAMQEKALDAAGGPDFLSGGAPIDNWVAPSLRNDPVVGLGRWSEDDIYTFLKSGRIDHSAVFGGMGDVVAWSTQYFTDDDLHAIAKYLKSLPPVPPSQGNYTYDPSTANMLASGNTASVPGADTYVKECAICHRNDGGGVARMFPPLAGNPVVVTENPTSLVNVIAHGGVLPPSNWAPSAVAMPGYSKSLSAQQIADVVNFIRTSWGNKAPGTVTAADVTKLRDTGAPVSSSGWNSVSSGWSVFLPQPYGSGWTFAPQTHTGQDAAQ.

The signal sequence occupies residues 1–23 (MINRLKVTFSAAAFSLLAGTALA). 3 Cytochrome c domains span residues 31 to 134 (ALVQ…MHGV), 178 to 293 (PEIA…KSLP), and 317 to 407 (TASV…RTSW). Cys-45, Cys-48, His-49, Cys-193, Cys-196, His-197, Cys-330, Cys-333, and His-334 together coordinate heme c.

The alcohol dehydrogenase multicomponent enzyme system is composed of a dehydrogenase subunit I (AdhA) and a cytochrome c subunit II (AdhB). Requires heme c as cofactor.

It is found in the cell membrane. The catalysed reaction is ethanol + a ubiquinone = a ubiquinol + acetaldehyde. In terms of biological role, cytochrome c component of the alcohol dehydrogenase multicomponent enzyme system which is involved in the production of acetic acid and in the ethanol oxidase respiratory chain. Quinohemoprotein alcohol dehydrogenase (ADH) catalyzes the oxidation of ethanol to acetaldehyde by transferring electrons to the ubiquinone embedded in the membrane phospholipids. The electrons transfer from ethanol to membranous ubiquinone occurs from pyrroloquinoline quinone (PQQ) to one heme c in subunit I (AdhA), and finally to two heme c in subunit II (AdhB). Besides ubiquinone reduction, ADH also has a ubiquinol (QH2) oxidation reaction which mediates electron transfer from ubiquinol to the non-energy generating bypass oxidase system. The electrons transfer occurs from ubiquinol (QH2) to the additional heme c within subunit II (AdhB). This chain is Alcohol dehydrogenase (quinone), cytochrome c subunit, found in Gluconacetobacter polyoxogenes (Acetobacter polyoxogenes).